A 296-amino-acid polypeptide reads, in one-letter code: Cytidine deaminase (296 aa).

2 consecutive CMP/dCMP-type deaminase domains span residues 47–167 and 186–296; these read TEAE…FGPK and DSSD…VDPV. Position 88-90 (88-90) interacts with substrate; sequence NLE. Histidine 101 lines the Zn(2+) pocket. The active-site Proton donor is glutamate 103. Residues cysteine 128 and cysteine 131 each coordinate Zn(2+).

It belongs to the cytidine and deoxycytidylate deaminase family. Homodimer. Requires Zn(2+) as cofactor.

It carries out the reaction cytidine + H2O + H(+) = uridine + NH4(+). It catalyses the reaction 2'-deoxycytidine + H2O + H(+) = 2'-deoxyuridine + NH4(+). This enzyme scavenges exogenous and endogenous cytidine and 2'-deoxycytidine for UMP synthesis. The sequence is that of Cytidine deaminase from Shewanella sp. (strain ANA-3).